The following is a 465-amino-acid chain: Cruciform DNA-recognizing protein 1 (465 aa).

Disordered regions lie at residues 107–227 (EAGG…VPNP) and 247–276 (RLNK…ALPQ). A compositionally biased stretch (basic residues) spans 127 to 151 (NRKKNKRNNKKRRSKLKKKSTKNNK). Serine 153 and serine 156 each carry phosphoserine. Residues 156 to 165 (SLDDNEEEDG) show a composition bias toward acidic residues. The X-DNA-binding stretch occupies residues 160 to 161 (NE). Over residues 166 to 177 (VTGTTTEDVTGT) the composition is skewed to low complexity. Phosphothreonine is present on threonine 182. Position 271 is a phosphoserine (serine 271). Position 295 is a phosphothreonine (threonine 295). Residues 298 to 465 (VEAVTPLINE…FFGKLKKLFK (168 aa)) are disordered. 2 positions are modified to phosphoserine: serine 319 and serine 343. The segment covering 337-363 (LVEKRESTEGVLDGSKKVENKAKKDEE) has biased composition (basic and acidic residues). Threonine 366 is modified (phosphothreonine). Basic and acidic residues-rich tracts occupy residues 385–398 (AEGR…EEKE) and 404–428 (EKGS…EVKK). Serine 394 carries the post-translational modification Phosphoserine. Residue serine 440 is modified to Phosphoserine. Residues 451–465 (KKKTGFFGKLKKLFK) are compositionally biased toward basic residues.

This sequence belongs to the CRP1/MDG1 family. Post-translationally, cleaved in the vicinity of position 160 to give an X-DNA-binding N-terminal subpeptide and a non-DNA-binding C-terminal subpeptide.

In terms of biological role, cruciform DNA-binding protein which exerts an enhancing effect on the cleavage of cruciform DNA (X-DNA) by endonuclease VII from bacteriophage T4. The polypeptide is Cruciform DNA-recognizing protein 1 (CRP1) (Saccharomyces cerevisiae (strain RM11-1a) (Baker's yeast)).